We begin with the raw amino-acid sequence, 150 residues long: Protein-export protein SecB (150 aa).

It belongs to the SecB family. Homotetramer, a dimer of dimers. One homotetramer interacts with 1 SecA dimer.

The protein localises to the cytoplasm. One of the proteins required for the normal export of preproteins out of the cell cytoplasm. It is a molecular chaperone that binds to a subset of precursor proteins, maintaining them in a translocation-competent state. It also specifically binds to its receptor SecA. In Polaromonas sp. (strain JS666 / ATCC BAA-500), this protein is Protein-export protein SecB.